Reading from the N-terminus, the 420-residue chain is Serine--tRNA ligase (420 aa).

An L-serine-binding site is contributed by 229-231; the sequence is TAE. An ATP-binding site is contributed by 260–262; that stretch reads RAE. Glu283 serves as a coordination point for L-serine. 347 to 350 contributes to the ATP binding site; it reads EISS. Ser382 contributes to the L-serine binding site.

It belongs to the class-II aminoacyl-tRNA synthetase family. Type-1 seryl-tRNA synthetase subfamily. Homodimer. The tRNA molecule binds across the dimer.

It localises to the cytoplasm. It catalyses the reaction tRNA(Ser) + L-serine + ATP = L-seryl-tRNA(Ser) + AMP + diphosphate + H(+). It carries out the reaction tRNA(Sec) + L-serine + ATP = L-seryl-tRNA(Sec) + AMP + diphosphate + H(+). It participates in aminoacyl-tRNA biosynthesis; selenocysteinyl-tRNA(Sec) biosynthesis; L-seryl-tRNA(Sec) from L-serine and tRNA(Sec): step 1/1. Functionally, catalyzes the attachment of serine to tRNA(Ser). Is also able to aminoacylate tRNA(Sec) with serine, to form the misacylated tRNA L-seryl-tRNA(Sec), which will be further converted into selenocysteinyl-tRNA(Sec). The polypeptide is Serine--tRNA ligase (Caldicellulosiruptor bescii (strain ATCC BAA-1888 / DSM 6725 / KCTC 15123 / Z-1320) (Anaerocellum thermophilum)).